The primary structure comprises 992 residues: MGVPSFFRWLSRKYPKIISPVLEEYPVIEDGVQLPLDYSSANPNGELDNLYLDMNGIVHPCSHPENKPPPETEDEMLLAVFEYTNRVLNMARPRKVLMIAVDGVAPRAKMNQQRARRFRSARDAKLQNEAREQVLREREDYGETIDENVKSKKTWDSNAITPGTPFMDKLATALRYWTSFKLATDPGWKNLQIIISDATVPGEGEHKIMNFIRSQRADTQYNPNTTHCIYGLDADLIFLGLATHEPHFKILREDVFANNNYKKPKPQDMINLSEEEKQQLIQQDSEKPFLWLHISVLREYLSAELAIPHLSFQFDFERAIDDWVFMCFFCGNDFLPHLPCLDVRENSIDILVDIWKTVLPKTKTYLTCDGTLNLEPVEALLEQLGDRETDLFKKKYIQEVRKQEAHDRRKKLKSNPNVSQGKVDRNFMIPLENMPVYDVDGNAAEGSLNLSNKDFANMRKEINLANEGDGEAAKALKLKSEKNSGVVEFSSEELKNSVQLSKTANYDAATSLQEKLIAKKMAMRDEENAEELSLKRKSEDVDSAEKETSNEPEDDEADYDEDEGSTVPPAVIHTGIVKSGFIDTDESVRLYEPGYHDRYYQHKFHVPAKDIPALQKDVIRCYVEGISWVLLYYYQGCASWTWYYPYHYAPFAQDFKNIKNLDIHFDLGEPFLPYEQLMSVLPAASGHALPEIFRPLMSDPNSEIIDFYPEEFPVDMNGKKMAWQGIALLPFIDETRLLKTVREQYSKLSDSEKARNVRKKDALLISNKNVNYDLFMKNLYGENPVNVIEFRHFKSGLSGFVTQAEEGFELNSKLICPINGGGLPDLSTNLFLKLSYTQPVVAGRCKSLVLNGYIPPQPMLTPQDRDCIIYKYSNRWNPSMMKYNIVPVGPSGITQYQPRVGGYRSFFFHKEQTAYAQQPQQNREYMHSQQRQPQGSRYQQSRYNNGNYNNSNNGYSDNNNGNTGKYNRHYNNSRGNSNRYSNSNDRRREFRR.

Residues 528–549 are compositionally biased toward basic and acidic residues; it reads NAEELSLKRKSEDVDSAEKETS. Disordered stretches follow at residues 528–568 and 916–992; these read NAEE…STVP and AQQP…EFRR. Residues 550 to 564 show a composition bias toward acidic residues; sequence NEPEDDEADYDEDEG. Composition is skewed to low complexity over residues 928–962 and 969–983; these read SQQR…NNGN and HYNN…YSNS.

The protein belongs to the 5'-3' exonuclease family. XRN2/RAT1 subfamily. In terms of assembly, interacts with RAI1; the interaction is direct, stabilizes RAT1 protein structure and may stimulate its exoribonuclease activity. The interaction also stimulates RAI1 pyrophosphohydrolase activity, probably by recruiting it to mRNA substrates.

The protein localises to the nucleus. In terms of biological role, possesses 5'-&gt;3' exoribonuclease activity. Required for the processing of nuclear mRNA and rRNA precursors. May promote the termination of transcription by RNA polymerase II. Essential for vegetative cell growth and chromosome segregation. In Kluyveromyces lactis (strain ATCC 8585 / CBS 2359 / DSM 70799 / NBRC 1267 / NRRL Y-1140 / WM37) (Yeast), this protein is 5'-3' exoribonuclease 2 (RAT1).